A 375-amino-acid chain; its full sequence is Tyrosine--tRNA ligase (375 aa).

5 residues coordinate L-tyrosine: Tyr37, Tyr168, Gln172, Asp175, and Gln190. Positions 251–255 match the 'KMSKS' region motif; that stretch reads KMSKS. Position 254 (Lys254) interacts with ATP.

This sequence belongs to the class-I aminoacyl-tRNA synthetase family. TyrS type 4 subfamily. Homodimer.

The protein localises to the cytoplasm. It catalyses the reaction tRNA(Tyr) + L-tyrosine + ATP = L-tyrosyl-tRNA(Tyr) + AMP + diphosphate + H(+). Catalyzes the attachment of tyrosine to tRNA(Tyr) in a two-step reaction: tyrosine is first activated by ATP to form Tyr-AMP and then transferred to the acceptor end of tRNA(Tyr). This Thermococcus sibiricus (strain DSM 12597 / MM 739) protein is Tyrosine--tRNA ligase.